The following is a 306-amino-acid chain: MSNEGGVPNVVKFAFGGTAGMGATLVVQPLDLVKNRMQLSGTTGKKEYRSSMHALTSIMKNEGVFAVYNGLSAGLLRQATYTTTRLGTYAFLLERFTEKDKPLSFGMKAVLGMTAGGIGSFVGTPAEIALIRMTGDGRLPVEQRRNYTGVVNALTRITKEEGVLTLWRGCTPTVLRAMVVNAAQLATYSQAKQALLASGKVQDGIFCHFLASMISGLATTIASMPVDIAKTRIQSMKVIDGKPEYKNAFDVWGKVIKNEGIFALWKGFTPYYMRLGPHTVLTFIILEQMNAAYFQYVLKRDVTSAL.

3 Solcar repeats span residues 7-95 (VPNV…LLER), 103-194 (LSFG…AKQA), and 203-292 (DGIF…MNAA). 6 helical membrane passes run 9-38 (NVVKFAFGGTAGMGATLVVQPLDLVKNRMQ), 72-93 (SAGLLRQATYTTTRLGTYAFLL), 108-122 (KAVLGMTAGGIGSFV), 172-192 (PTVLRAMVVNAAQLATYSQAK), 205-226 (IFCHFLASMISGLATTIASMPV), and 268-286 (FTPYYMRLGPHTVLTFIIL).

This sequence belongs to the mitochondrial carrier (TC 2.A.29) family. In terms of assembly, interacts with ant-1.1 and ced-9. As to expression, ubiquitously expressed, but highly expressed in the anterior pharynx.

It is found in the mitochondrion. Its subcellular location is the mitochondrion inner membrane. It catalyses the reaction (S)-malate(in) + 2-oxoglutarate(out) = (S)-malate(out) + 2-oxoglutarate(in). The catalysed reaction is malonate(in) + 2-oxoglutarate(out) = malonate(out) + 2-oxoglutarate(in). It carries out the reaction succinate(in) + 2-oxoglutarate(out) = succinate(out) + 2-oxoglutarate(in). The enzyme catalyses maleate(in) + 2-oxoglutarate(out) = maleate(out) + 2-oxoglutarate(in). It catalyses the reaction oxaloacetate(in) + 2-oxoglutarate(out) = oxaloacetate(out) + 2-oxoglutarate(in). Its function is as follows. Catalyzes the transport of 2-oxoglutarate (alpha-oxoglutarate) across the inner mitochondrial membrane in an electroneutral exchange for malate. Can also exchange 2-oxoglutarate for other dicarboxylic acids such as malonate, succinate, maleate and oxaloacetate, although with lower affinity. Contributes to several metabolic processes, including the malate-aspartate shuttle, the oxoglutarate/isocitrate shuttle, in gluconeogenesis from lactate, and in nitrogen metabolism. Maintains mitochondrial fusion and fission events, and the organization and morphology of cristae. Regulator of apoptosis, insulin secretion and germline proliferation. Furthermore, plays a role in the oxidative stress response regulating endogenous levels of reactive oxygen species (ROS). Involved in the regulation of lin-35/Rb-mediated apoptosis in the germline. In Caenorhabditis elegans, this protein is Mitochondrial 2-oxoglutarate/malate carrier protein.